The following is a 111-amino-acid chain: Nucleoid-associated protein NMCC_1355 (111 aa).

Belongs to the YbaB/EbfC family. Homodimer.

It localises to the cytoplasm. Its subcellular location is the nucleoid. Binds to DNA and alters its conformation. May be involved in regulation of gene expression, nucleoid organization and DNA protection. The chain is Nucleoid-associated protein NMCC_1355 from Neisseria meningitidis serogroup C (strain 053442).